The primary structure comprises 227 residues: Enolase-phosphatase E1 (227 aa).

The protein belongs to the HAD-like hydrolase superfamily. MasA/MtnC family. Monomer. Requires Mg(2+) as cofactor.

It carries out the reaction 5-methylsulfanyl-2,3-dioxopentyl phosphate + H2O = 1,2-dihydroxy-5-(methylsulfanyl)pent-1-en-3-one + phosphate. Its pathway is amino-acid biosynthesis; L-methionine biosynthesis via salvage pathway; L-methionine from S-methyl-5-thio-alpha-D-ribose 1-phosphate: step 3/6. The protein operates within amino-acid biosynthesis; L-methionine biosynthesis via salvage pathway; L-methionine from S-methyl-5-thio-alpha-D-ribose 1-phosphate: step 4/6. Bifunctional enzyme that catalyzes the enolization of 2,3-diketo-5-methylthiopentyl-1-phosphate (DK-MTP-1-P) into the intermediate 2-hydroxy-3-keto-5-methylthiopentenyl-1-phosphate (HK-MTPenyl-1-P), which is then dephosphorylated to form the acireductone 1,2-dihydroxy-3-keto-5-methylthiopentene (DHK-MTPene). This Pseudomonas syringae pv. tomato (strain ATCC BAA-871 / DC3000) protein is Enolase-phosphatase E1.